The primary structure comprises 1141 residues: Isoleucine--tRNA ligase (1141 aa).

A 'HIGH' region motif is present at residues Pro-50–His-60. Positions Lys-689 to Arg-693 match the 'KMSKS' region motif. Lys-692 provides a ligand contact to ATP.

The protein belongs to the class-I aminoacyl-tRNA synthetase family. IleS type 2 subfamily. Monomer. Requires Zn(2+) as cofactor.

Its subcellular location is the cytoplasm. It carries out the reaction tRNA(Ile) + L-isoleucine + ATP = L-isoleucyl-tRNA(Ile) + AMP + diphosphate. Catalyzes the attachment of isoleucine to tRNA(Ile). As IleRS can inadvertently accommodate and process structurally similar amino acids such as valine, to avoid such errors it has two additional distinct tRNA(Ile)-dependent editing activities. One activity is designated as 'pretransfer' editing and involves the hydrolysis of activated Val-AMP. The other activity is designated 'posttransfer' editing and involves deacylation of mischarged Val-tRNA(Ile). This chain is Isoleucine--tRNA ligase, found in Bacteroides fragilis (strain YCH46).